Consider the following 192-residue polypeptide: UPF0301 protein BMA10247_1859 (192 aa).

This sequence belongs to the UPF0301 (AlgH) family.

The chain is UPF0301 protein BMA10247_1859 from Burkholderia mallei (strain NCTC 10247).